Consider the following 324-residue polypeptide: Ribosomal RNA small subunit methyltransferase H (324 aa).

S-adenosyl-L-methionine is bound by residues 40–42, D60, L94, D108, and H115; that span reads AGH. The segment at 301–324 is disordered; the sequence is EEMKVNTRSRSAKLRVAERTGEDG. A compositionally biased stretch (basic and acidic residues) spans 315–324; that stretch reads RVAERTGEDG.

Belongs to the methyltransferase superfamily. RsmH family.

The protein localises to the cytoplasm. It carries out the reaction cytidine(1402) in 16S rRNA + S-adenosyl-L-methionine = N(4)-methylcytidine(1402) in 16S rRNA + S-adenosyl-L-homocysteine + H(+). Specifically methylates the N4 position of cytidine in position 1402 (C1402) of 16S rRNA. In Maridesulfovibrio salexigens (strain ATCC 14822 / DSM 2638 / NCIMB 8403 / VKM B-1763) (Desulfovibrio salexigens), this protein is Ribosomal RNA small subunit methyltransferase H.